The chain runs to 99 residues: C-C motif chemokine 17 (99 aa).

An N-terminal signal peptide occupies residues 1 to 23 (MIPLKMLLLVTLLLGASLQVTHA). 2 cysteine pairs are disulfide-bonded: Cys-33/Cys-57 and Cys-34/Cys-73.

It belongs to the intercrine beta (chemokine CC) family. Expressed in thymus, spleen, lymph node, lung and heart.

The protein localises to the secreted. In terms of biological role, chemokine, which displays chemotactic activity for T lymphocytes, preferentially Th2 cells, but not monocytes or granulocytes. Therefore plays an important role in a wide range of inflammatory and immunological processes. Acts by binding to CCR4 at T-cell surface. Mediates GM-CSF/CSF2-driven pain and inflammation. In the brain, required to maintain the typical, highly branched morphology of hippocampal microglia under homeostatic conditions. May be important for the appropriate adaptation of microglial morphology and synaptic plasticity to acute lipopolysaccharide (LPS)-induced neuroinflammation. Plays a role in wound healing, mainly by inducing fibroblast migration into the wound. The sequence is that of C-C motif chemokine 17 (CCL17) from Canis lupus familiaris (Dog).